The following is a 137-amino-acid chain: Lysozyme (137 aa).

The signal sequence occupies residues 1–18 (MQKLIIFALVVLCVGSEA). One can recognise a C-type lysozyme domain in the interval 19–137 (KTFTRCGLVH…QGSLPDISSC (119 aa)). Intrachain disulfides connect Cys24–Cys137, Cys45–Cys127, Cys79–Cys93, and Cys89–Cys107. Residues Glu50 and Asp67 contribute to the active site.

Belongs to the glycosyl hydrolase 22 family.

The enzyme catalyses Hydrolysis of (1-&gt;4)-beta-linkages between N-acetylmuramic acid and N-acetyl-D-glucosamine residues in a peptidoglycan and between N-acetyl-D-glucosamine residues in chitodextrins.. Functionally, lysozymes have primarily a bacteriolytic function; those in tissues and body fluids are associated with the monocyte-macrophage system and enhance the activity of immunoagents. Active against E.coli and M.luteus. The protein is Lysozyme of Bombyx mori (Silk moth).